A 352-amino-acid chain; its full sequence is Ion-translocating oxidoreductase complex subunit D (352 aa).

4 consecutive transmembrane segments (helical) span residues 20–40, 44–64, 78–109, and 123–143; these read IMLL…WFFG, LFQI…VLSL, ALLT…IIIA, and PAMI…TSWL. Thr-187 is subject to FMN phosphoryl threonine. The next 5 membrane-spanning stretches (helical) occupy residues 214 to 234, 242 to 262, 267 to 287, 301 to 321, and 322 to 342; these read VLAG…GVFL, WHIP…GWLF, LASP…FFIL, LIFG…GGYP, and DGVA…DYYT.

Belongs to the NqrB/RnfD family. As to quaternary structure, the complex is composed of six subunits: RsxA, RsxB, RsxC, RsxD, RsxE and RsxG. FMN serves as cofactor.

Its subcellular location is the cell inner membrane. In terms of biological role, part of a membrane-bound complex that couples electron transfer with translocation of ions across the membrane. Required to maintain the reduced state of SoxR. In Salmonella arizonae (strain ATCC BAA-731 / CDC346-86 / RSK2980), this protein is Ion-translocating oxidoreductase complex subunit D.